The chain runs to 266 residues: ATP synthase subunit a (266 aa).

The next 5 membrane-spanning stretches (helical) occupy residues 28 to 48 (SINVDSMFFSIALGILFLVIF), 88 to 108 (LIAPLALTIFVWVFLMNMMDL), 141 to 161 (DVNITLSMALGVFILVLFYSI), 206 to 226 (LFGNMYAGELIFILIAGLLPW), and 237 to 257 (AIFHILIITLQAFIFMVLTVV).

This sequence belongs to the ATPase A chain family. F-type ATPases have 2 components, CF(1) - the catalytic core - and CF(0) - the membrane proton channel. CF(1) has five subunits: alpha(3), beta(3), gamma(1), delta(1), epsilon(1). CF(0) has three main subunits: a(1), b(2) and c(9-12). The alpha and beta chains form an alternating ring which encloses part of the gamma chain. CF(1) is attached to CF(0) by a central stalk formed by the gamma and epsilon chains, while a peripheral stalk is formed by the delta and b chains.

It is found in the cell inner membrane. Its function is as follows. Key component of the proton channel; it plays a direct role in the translocation of protons across the membrane. This is ATP synthase subunit a from Pectobacterium atrosepticum (strain SCRI 1043 / ATCC BAA-672) (Erwinia carotovora subsp. atroseptica).